The chain runs to 574 residues: Glycine--tRNA ligase (574 aa).

Substrate-binding residues include Arg96 and Glu162. ATP is bound by residues Arg194–Glu196, Ile204–Phe209, Glu327–Cys328, and Gly450–Arg453. Substrate is bound at residue Phe209–Glu213. Glu446 to Gly450 is a substrate binding site.

The protein belongs to the class-II aminoacyl-tRNA synthetase family.

Its subcellular location is the cytoplasm. The catalysed reaction is tRNA(Gly) + glycine + ATP = glycyl-tRNA(Gly) + AMP + diphosphate. Functionally, catalyzes the attachment of glycine to tRNA(Gly). The chain is Glycine--tRNA ligase from Methanococcus vannielii (strain ATCC 35089 / DSM 1224 / JCM 13029 / OCM 148 / SB).